The primary structure comprises 456 residues: Phosphomethylpyrimidine synthase (456 aa).

Substrate-binding positions include N80, M109, Y139, H175, 195–197 (SRG), 236–239 (DSLR), and E275. H279 serves as a coordination point for Zn(2+). Y302 serves as a coordination point for substrate. H343 contributes to the Zn(2+) binding site. Residues C423, C426, and C431 each coordinate [4Fe-4S] cluster.

It belongs to the ThiC family. [4Fe-4S] cluster is required as a cofactor.

It catalyses the reaction 5-amino-1-(5-phospho-beta-D-ribosyl)imidazole + S-adenosyl-L-methionine = 4-amino-2-methyl-5-(phosphooxymethyl)pyrimidine + CO + 5'-deoxyadenosine + formate + L-methionine + 3 H(+). It functions in the pathway cofactor biosynthesis; thiamine diphosphate biosynthesis. Functionally, catalyzes the synthesis of the hydroxymethylpyrimidine phosphate (HMP-P) moiety of thiamine from aminoimidazole ribotide (AIR) in a radical S-adenosyl-L-methionine (SAM)-dependent reaction. This is Phosphomethylpyrimidine synthase from Prochlorococcus marinus subsp. pastoris (strain CCMP1986 / NIES-2087 / MED4).